Here is a 273-residue protein sequence, read N- to C-terminus: Eukaryotic translation initiation factor 3 subunit G-2 (273 aa).

The tract at residues Pro-168–Ser-192 is disordered. Residues Asp-173–Trp-183 are compositionally biased toward gly residues. Residues Ser-193–Pro-271 form the RRM domain.

Belongs to the eIF-3 subunit G family. Component of the eukaryotic translation initiation factor 3 (eIF-3) complex. The eIF-3 complex interacts with pix.

It is found in the cytoplasm. Functionally, RNA-binding component of the eukaryotic translation initiation factor 3 (eIF-3) complex, which is involved in protein synthesis of a specialized repertoire of mRNAs and, together with other initiation factors, stimulates binding of mRNA and methionyl-tRNAi to the 40S ribosome. The eIF-3 complex specifically targets and initiates translation of a subset of mRNAs involved in cell proliferation. This subunit can bind 18S rRNA. The sequence is that of Eukaryotic translation initiation factor 3 subunit G-2 from Drosophila erecta (Fruit fly).